Here is a 206-residue protein sequence, read N- to C-terminus: MARYTGPDCRLCRREGMKLFLKGTKCFSEKCPFERRPFPPGQHGRAQRKLTEYGLRLREKQRAKRIYGVLERQFRRYFEIASKGRGVTGERLLQLLETRLDNVVYRLGWALSRAQARQIVSHGKIAVNGKRVNIPSYNLKPGDVVELLDKDLIPVQEAISVFGNKSVPAWLELDRENLRGKVLRLPKREEIDTPVQEQLIVEFYSR.

The region spanning 98–155 is the S4 RNA-binding domain; sequence TRLDNVVYRLGWALSRAQARQIVSHGKIAVNGKRVNIPSYNLKPGDVVELLDKDLIPV.

The protein belongs to the universal ribosomal protein uS4 family. In terms of assembly, part of the 30S ribosomal subunit. Contacts protein S5. The interaction surface between S4 and S5 is involved in control of translational fidelity.

One of the primary rRNA binding proteins, it binds directly to 16S rRNA where it nucleates assembly of the body of the 30S subunit. Functionally, with S5 and S12 plays an important role in translational accuracy. The sequence is that of Small ribosomal subunit protein uS4 from Dictyoglomus turgidum (strain DSM 6724 / Z-1310).